The following is a 368-amino-acid chain: Geranylgeranyl pyrophosphate synthase dpfgD (368 aa).

The isopentenyl diphosphate site is built by lysine 48, arginine 51, and histidine 80. Mg(2+)-binding residues include aspartate 87 and aspartate 91. Arginine 96 serves as a coordination point for dimethylallyl diphosphate. Arginine 97 provides a ligand contact to isopentenyl diphosphate. The dimethylallyl diphosphate site is built by lysine 174, threonine 175, and glutamine 208. Aspartate 211 provides a ligand contact to Mg(2+). 3 residues coordinate dimethylallyl diphosphate: asparagine 215, lysine 225, and lysine 235.

The protein belongs to the FPP/GGPP synthase family. Mg(2+) serves as cofactor.

The enzyme catalyses isopentenyl diphosphate + dimethylallyl diphosphate = (2E)-geranyl diphosphate + diphosphate. It carries out the reaction isopentenyl diphosphate + (2E)-geranyl diphosphate = (2E,6E)-farnesyl diphosphate + diphosphate. It catalyses the reaction isopentenyl diphosphate + (2E,6E)-farnesyl diphosphate = (2E,6E,10E)-geranylgeranyl diphosphate + diphosphate. The protein operates within secondary metabolite biosynthesis; terpenoid biosynthesis. Its function is as follows. Geranylgeranyl pyrophosphate synthase; part of the gene cluster that mediates the biosynthesis of diterpenoid pyrones. The first step of the pathway is the synthesis of the alpha-pyrone moiety by the polyketide synthase dpfgA via condensation of one acetyl-CoA starter unit with 3 malonyl-CoA units and 2 methylations. The alpha-pyrone is then combined with geranylgeranyl pyrophosphate (GGPP) formed by the GGPP synthase dpfgD through the action of the prenyltransferase dpfgC to yield a linear alpha-pyrone diterpenoid. Subsequent steps in the diterpenoid pyrone biosynthetic pathway involve the decalin core formation, which is initiated by the epoxidation of the C10-C11 olefin by the FAD-dependent oxidoreductase dpfgE, and is followed by a cyclization cascade catalyzed by the terpene cyclase dpfgB. The short chain dehydrogenase/reductase dpfgG then oxidizes the 8S hydroxy group to a ketone and the short chain dehydrogenase/reductase dpfgH reduces the ketone to the 8R hydroxy group to yield higginsianin B. Higginsianin B is further methylated by the methyltransferase dpfgI to produce the intermediate named FDDP B. The cytochrome P450 monooxygenase dfgpJ then catalyzes a three-step oxidation at C-27 to generate a carboxylic acid as well as C-26 hydroxylation. Finally, methyltransferase dpfgK methylates the carboxylic acid generated by dpfgJ, yielding the final diterpenoid pyrones from the pathway which were named FDDP D and FDDP E. In Gibberella zeae (strain ATCC MYA-4620 / CBS 123657 / FGSC 9075 / NRRL 31084 / PH-1) (Wheat head blight fungus), this protein is Geranylgeranyl pyrophosphate synthase dpfgD.